The primary structure comprises 133 residues: Small ribosomal subunit protein uS9 (133 aa).

Residues 94 to 133 are disordered; that stretch reads SADNRKPLKTEGHLSRDPRAKERRKYGLKKARKAPQFSKR. Basic and acidic residues predominate over residues 95–113; the sequence is ADNRKPLKTEGHLSRDPRA. A compositionally biased stretch (basic residues) spans 114–133; that stretch reads KERRKYGLKKARKAPQFSKR.

Belongs to the universal ribosomal protein uS9 family.

In Synechococcus sp. (strain CC9605), this protein is Small ribosomal subunit protein uS9.